We begin with the raw amino-acid sequence, 292 residues long: MYRFIIFFSLLALTASKVSEPEKDDEIAVKIPTKRSVSEPPKDDDIAVKIPMRKKRGIAIHPWQWESHLWPNAEVPYDIASHYTATERGIILSAMEAFRDVTCVRFRPRRSTDKHYLQINKHYQLERCFSYIGRQSSRWLFGTRDGKVETRMKLDPSCLLYNGRGTVMHELMHILGFYHEHQRDDRDRRIGGSASHYNFKIYQRAKSYYMGGYDANSIMHYNFGSVPWQKRDYFSPSDIRNINTLYKCNNRVVSKFPSTIPSTSTTTTKAPQFELFEKKQIESNSLFRRRRS.

The signal sequence occupies residues 1-16 (MYRFIIFFSLLALTAS). The region spanning 56–249 (RGIAIHPWQW…RNINTLYKCN (194 aa)) is the Peptidase M12A domain. Cystine bridges form between C103-C248 and C128-C158. H169 contributes to the Zn(2+) binding site. The active site involves E170. 2 residues coordinate Zn(2+): H173 and H179.

It depends on Zn(2+) as a cofactor.

It localises to the secreted. In terms of biological role, metalloprotease. The polypeptide is Zinc metalloproteinase nas-3 (nas-3) (Caenorhabditis elegans).